We begin with the raw amino-acid sequence, 263 residues long: Post-GPI attachment to proteins factor 2 (263 aa).

A run of 6 helical transmembrane segments spans residues 16 to 36, 69 to 89, 109 to 129, 143 to 163, 180 to 200, and 208 to 228; these read FVIC…ILSL, YIWR…AIAF, FLCN…LALT, CFGG…WLFN, YKIL…YLYW, and PGIY…NIFF.

This sequence belongs to the PGAP2 family.

The protein localises to the golgi apparatus membrane. It localises to the endoplasmic reticulum membrane. Its function is as follows. Involved in the lipid remodeling steps of GPI-anchor maturation. Required for stable expression of GPI-anchored proteins at the cell surface. The protein is Post-GPI attachment to proteins factor 2 of Caenorhabditis elegans.